Consider the following 99-residue polypeptide: Large ribosomal subunit protein bL28 (99 aa).

The protein belongs to the bacterial ribosomal protein bL28 family.

The protein is Large ribosomal subunit protein bL28 of Caulobacter vibrioides (strain ATCC 19089 / CIP 103742 / CB 15) (Caulobacter crescentus).